A 500-amino-acid polypeptide reads, in one-letter code: Hexose transporter 1 (500 aa).

The Cytoplasmic portion of the chain corresponds to 1-25 (MKNSNEISSSQSLKNNGSDGFFNTS). A helical membrane pass occupies residues 26-46 (LMYVLAACLASFLFGYQVSVL). At 47-75 (NTIKDFIVIEFGWCAGKEVNCDDSTLKSS) the chain is on the extracellular side. C60 and C67 form a disulfide bridge. Residues 76-96 (FLLASVFIGAVVGSGFSGFLV) traverse the membrane as a helical segment. The Cytoplasmic segment spans residues 97 to 101 (QHGRR). The chain crosses the membrane as a helical span at residues 102–122 (FSLLVIYNFFILVSILTSITH). At 123-131 (HFHTILFSR) the chain is on the extracellular side. Residues 132 to 152 (LLSGFGIGLITVSVPMYISEM) traverse the membrane as a helical segment. Topologically, residues 153–166 (THKDKKGAYGVLHQ) are cytoplasmic. Residue Q166 participates in alpha-D-glucose binding. Beta-D-glucose is bound at residue Q166. The chain crosses the membrane as a helical span at residues 167 to 187 (LFITFGIFIAVLLGMAMGNVP). At 188-203 (EEVNNPLGTFQQIWWR) the chain is on the extracellular side. A helical membrane pass occupies residues 204-224 (LMFFFPCIISILGIVLLTFFF). The Cytoplasmic segment spans residues 225–289 (KEETPYYLFE…RAMKIPSYRY (65 aa)). A helical membrane pass occupies residues 290–310 (VILLGCILSGLQQFTGINVLV). Alpha-D-glucose is bound by residues Q301, Q302, and N307. A beta-D-glucose-binding site is contributed by Q301. N307 is a binding site for beta-D-glucose. The Extracellular segment spans residues 311–327 (SNSNALYKGFLTNEWIT). A helical transmembrane segment spans residues 328–348 (TLSVIMTVVNFLMTFPAIYIV). N337 serves as a coordination point for beta-D-glucose. The Cytoplasmic portion of the chain corresponds to 349–356 (EKLGRKTL). A helical transmembrane segment spans residues 357-377 (LLCGCAGIVCAFLPTAIANLI). Over 378–390 (NNTSDVVKKLSIS) the chain is Extracellular. The helical transmembrane segment at 391–411 (ATFVMIVSFAVSYGPVLWIYL) threads the bilayer. Position 408 (W408) interacts with alpha-D-glucose. At 412 to 425 (HEMFPSEIKDSAAS) the chain is on the cytoplasmic side. A helical transmembrane segment spans residues 426 to 446 (LASLVNWMCAIIVVFPSDIII). The Extracellular portion of the chain corresponds to 447–451 (KQSPT). The chain crosses the membrane as a helical span at residues 452 to 472 (ILFFIFSGMSIVAFLFIFFFI). Residues 473–500 (KETKGGEIGTSPYITLEERQKHMGKSVV) are Cytoplasmic-facing.

It belongs to the major facilitator superfamily. Sugar transporter (TC 2.A.1.1) family. Homodimer.

The protein resides in the cell membrane. It catalyses the reaction D-glucose(out) = D-glucose(in). It carries out the reaction D-fructose(out) = D-fructose(in). The catalysed reaction is D-galactose(in) = D-galactose(out). The enzyme catalyses D-mannose(out) = D-mannose(in). It catalyses the reaction D-glucosamine(out) = D-glucosamine(in). It carries out the reaction D-xylose(out) = D-xylose(in). With respect to regulation, inhibited by cytochalasin B. Its function is as follows. Sodium-independent facilitative hexose transporter. Can transport D-glucose and D-fructose. Can transport D-mannose, D-galactose, D-xylose and D-glucosamine. The polypeptide is Hexose transporter 1 (Plasmodium knowlesi).